A 337-amino-acid polypeptide reads, in one-letter code: ATP-dependent 6-phosphofructokinase (337 aa).

Position 11 (Gly-11) interacts with ATP. An ADP-binding site is contributed by 21–25 (RAVVR). ATP-binding positions include 72–73 (RY) and 102–105 (GDGS). A Mg(2+)-binding site is contributed by Asp-103. A substrate-binding site is contributed by 125–127 (TID). The active-site Proton acceptor is the Asp-127. ADP is bound at residue Arg-154. Residues Arg-162 and 169 to 171 (MGR) each bind substrate. Residues 185–187 (GAD), Arg-212, and 214–216 (KNH) each bind ADP. Residues Glu-223, Arg-245, and 251–254 (HILR) contribute to the substrate site.

It belongs to the phosphofructokinase type A (PFKA) family. ATP-dependent PFK group I subfamily. Prokaryotic clade 'B1' sub-subfamily. As to quaternary structure, homotetramer. Mg(2+) is required as a cofactor.

It localises to the cytoplasm. It carries out the reaction beta-D-fructose 6-phosphate + ATP = beta-D-fructose 1,6-bisphosphate + ADP + H(+). The protein operates within carbohydrate degradation; glycolysis; D-glyceraldehyde 3-phosphate and glycerone phosphate from D-glucose: step 3/4. With respect to regulation, allosterically activated by ADP and other diphosphonucleosides, and allosterically inhibited by phosphoenolpyruvate. In terms of biological role, catalyzes the phosphorylation of D-fructose 6-phosphate to fructose 1,6-bisphosphate by ATP, the first committing step of glycolysis. The sequence is that of ATP-dependent 6-phosphofructokinase from Streptococcus equi subsp. zooepidemicus (strain H70).